We begin with the raw amino-acid sequence, 264 residues long: Thymidylate synthase (264 aa).

Arg-21 is a dUMP binding site. (6R)-5,10-methylene-5,6,7,8-tetrahydrofolate is bound at residue His-51. 126 to 127 contacts dUMP; that stretch reads RR. Cys-146 serves as the catalytic Nucleophile. Residues 166 to 169, Asn-177, and 207 to 209 contribute to the dUMP site; these read RSCD and HLY. Asp-169 contributes to the (6R)-5,10-methylene-5,6,7,8-tetrahydrofolate binding site. Position 263 (Ala-263) interacts with (6R)-5,10-methylene-5,6,7,8-tetrahydrofolate.

The protein belongs to the thymidylate synthase family. Bacterial-type ThyA subfamily. Homodimer.

The protein localises to the cytoplasm. The catalysed reaction is dUMP + (6R)-5,10-methylene-5,6,7,8-tetrahydrofolate = 7,8-dihydrofolate + dTMP. Its pathway is pyrimidine metabolism; dTTP biosynthesis. Catalyzes the reductive methylation of 2'-deoxyuridine-5'-monophosphate (dUMP) to 2'-deoxythymidine-5'-monophosphate (dTMP) while utilizing 5,10-methylenetetrahydrofolate (mTHF) as the methyl donor and reductant in the reaction, yielding dihydrofolate (DHF) as a by-product. This enzymatic reaction provides an intracellular de novo source of dTMP, an essential precursor for DNA biosynthesis. This is Thymidylate synthase from Buchnera aphidicola subsp. Baizongia pistaciae (strain Bp).